The sequence spans 594 residues: Zinc finger protein 467 (594 aa).

The disordered stretch occupies residues Met1–Met70. Lys97 participates in a covalent cross-link: Glycyl lysine isopeptide (Lys-Gly) (interchain with G-Cter in SUMO2). 12 C2H2-type zinc fingers span residues Tyr160 to His182, Cys188 to His210, Phe216 to His238, Tyr244 to His266, Phe272 to His294, Tyr300 to His322, Phe355 to His377, Phe430 to His452, Phe458 to His480, Phe486 to His508, His514 to His536, and Phe542 to His564. Residues Gln313–Thr350 are disordered. Residue Lys368 forms a Glycyl lysine isopeptide (Lys-Gly) (interchain with G-Cter in SUMO2) linkage.

This sequence belongs to the krueppel C2H2-type zinc-finger protein family. Interacts with STAT3. Enhances STAT3 activity by keeping it in the nucleus.

The protein localises to the nucleus. Its function is as follows. Transcription factor that promotes adipocyte differentiation and suppresses osteoblast differentiation in the bone marrow. Enhances the osteoclast-supporting ability of stromal cells. Binds with STAT3 the consensus sequence 5'-CTTCTGGGAAGA-3' of the acute phase response element (APRE). Transactivates several promoters including FOS, OSM and PPARG. Recruits a histone deacetylase complex. The protein is Zinc finger protein 467 (Znf467) of Rattus norvegicus (Rat).